Consider the following 432-residue polypeptide: Phosphomethylpyrimidine synthase (432 aa).

Residues Asn-66, Met-95, Tyr-124, His-163, 185–187, 226–229, and Glu-265 contribute to the substrate site; these read SRG and DGLR. His-269 contacts Zn(2+). Position 292 (Tyr-292) interacts with substrate. Position 333 (His-333) interacts with Zn(2+). Positions 409, 412, and 416 each coordinate [4Fe-4S] cluster.

It belongs to the ThiC family. The cofactor is [4Fe-4S] cluster.

The catalysed reaction is 5-amino-1-(5-phospho-beta-D-ribosyl)imidazole + S-adenosyl-L-methionine = 4-amino-2-methyl-5-(phosphooxymethyl)pyrimidine + CO + 5'-deoxyadenosine + formate + L-methionine + 3 H(+). The protein operates within cofactor biosynthesis; thiamine diphosphate biosynthesis. Functionally, catalyzes the synthesis of the hydroxymethylpyrimidine phosphate (HMP-P) moiety of thiamine from aminoimidazole ribotide (AIR) in a radical S-adenosyl-L-methionine (SAM)-dependent reaction. In Desulfitobacterium hafniense (strain DSM 10664 / DCB-2), this protein is Phosphomethylpyrimidine synthase.